The chain runs to 223 residues: Cytidylate kinase (223 aa).

12-20 (GPSGVGKGT) is an ATP binding site.

Belongs to the cytidylate kinase family. Type 1 subfamily.

It is found in the cytoplasm. The catalysed reaction is CMP + ATP = CDP + ADP. It carries out the reaction dCMP + ATP = dCDP + ADP. The protein is Cytidylate kinase of Xylella fastidiosa (strain 9a5c).